A 284-amino-acid polypeptide reads, in one-letter code: Origin of replication complex subunit 6 (284 aa).

The protein belongs to the ORC6 family. As to quaternary structure, component of the origin recognition complex (ORC) composed of at least ORC1 (ORC1A or ORC1B), ORC2, ORC3, ORC4, ORC5 and ORC6. ORC is regulated in a cell-cycle and development dependent manner. It is sequentially assembled at the exit from anaphase of mitosis and disassembled as cells enter S phase. Interacts directly with ORC2, ORC3, ORC4 and ORC5. Follow a cell-cycle regulation with a peak at the G1/S-phase. Mostly expressed in siliques, flowers, flower buds and mature leaves, and, to a lower exent, in roots, leaves and stems.

It is found in the nucleus. Functionally, component of the origin recognition complex (ORC) that binds origins of replication. DNA-binding is ATP-dependent. The specific DNA sequences that define origins of replication have not been identified yet. ORC is required to assemble the pre-replication complex necessary to initiate DNA replication. In Arabidopsis thaliana (Mouse-ear cress), this protein is Origin of replication complex subunit 6.